Consider the following 499-residue polypeptide: Lysine--tRNA ligase (499 aa).

Mg(2+) is bound by residues E408 and E415.

Belongs to the class-II aminoacyl-tRNA synthetase family. Homodimer. Mg(2+) serves as cofactor.

The protein resides in the cytoplasm. The catalysed reaction is tRNA(Lys) + L-lysine + ATP = L-lysyl-tRNA(Lys) + AMP + diphosphate. The protein is Lysine--tRNA ligase of Bacillus cereus (strain AH820).